Here is a 238-residue protein sequence, read N- to C-terminus: Survival of motor neuron-related-splicing factor 30 (238 aa).

Positions 72-132 constitute a Tudor domain; the sequence is SWKVGDKCMA…KPVEEGRKAK (61 aa). A Nuclear localization signal motif is present at residues 142-160; it reads KKEMIAQQREYKKKKALKK. Ser-201 carries the post-translational modification Phosphoserine. Lys-219 bears the N6-acetyllysine mark.

This sequence belongs to the SMN family. In terms of assembly, associates with spliceosomes. Associates with U4/U5/U6 tri-snRNP and with U2 snRNP.

It localises to the nucleus speckle. The protein resides in the nucleus. It is found in the cajal body. Involved in spliceosome assembly. In Bos taurus (Bovine), this protein is Survival of motor neuron-related-splicing factor 30 (SMNDC1).